The primary structure comprises 156 residues: ATP synthase subunit b (156 aa).

The helical transmembrane segment at 12 to 32 (VAFFIFVLFCMKFVWPPVIAA) threads the bilayer.

This sequence belongs to the ATPase B chain family. F-type ATPases have 2 components, F(1) - the catalytic core - and F(0) - the membrane proton channel. F(1) has five subunits: alpha(3), beta(3), gamma(1), delta(1), epsilon(1). F(0) has three main subunits: a(1), b(2) and c(10-14). The alpha and beta chains form an alternating ring which encloses part of the gamma chain. F(1) is attached to F(0) by a central stalk formed by the gamma and epsilon chains, while a peripheral stalk is formed by the delta and b chains.

It localises to the cell inner membrane. In terms of biological role, f(1)F(0) ATP synthase produces ATP from ADP in the presence of a proton or sodium gradient. F-type ATPases consist of two structural domains, F(1) containing the extramembraneous catalytic core and F(0) containing the membrane proton channel, linked together by a central stalk and a peripheral stalk. During catalysis, ATP synthesis in the catalytic domain of F(1) is coupled via a rotary mechanism of the central stalk subunits to proton translocation. Its function is as follows. Component of the F(0) channel, it forms part of the peripheral stalk, linking F(1) to F(0). This chain is ATP synthase subunit b, found in Pseudomonas paraeruginosa (strain DSM 24068 / PA7) (Pseudomonas aeruginosa (strain PA7)).